The primary structure comprises 548 residues: Leucine-rich repeat LGI family member 3 (548 aa).

An N-terminal signal peptide occupies residues 1-30 (MAGLRARRGPGRRLLVLSTLGFCLMLQVSA). Residues 31 to 64 (KRPPKTPPCPPSCSCTRDTAFCVDSKSVPKNLPS) form the LRRNT domain. LRR repeat units follow at residues 89-110 (LLQF…AFIG), 113-134 (HLQY…TFRG), and 137-158 (SLTH…IFRP). Residues 170–220 (NALNCDCKVKWLVEWLAHTNTTVAPIYCASPPRFQEHKVQDLPLREFDCIT) form the LRRCT domain. Asparagine 189 is a glycosylation site (N-linked (GlcNAc...) asparagine). EAR repeat units follow at residues 222–264 (DFVL…KWDY) and 268–310 (QLRD…HWDP). Residue asparagine 311 is glycosylated (N-linked (GlcNAc...) asparagine). EAR repeat units follow at residues 314 to 361 (RFTK…RWHQ), 363 to 406 (GFYS…QWSR), 410 to 453 (QFVA…RWEG), 455 to 497 (RFSE…QWDE), and 501 to 543 (KFVR…RHVV).

As to quaternary structure, interacts with STX1A. As to expression, brain.

It is found in the secreted. The protein resides in the cytoplasmic vesicle. Its subcellular location is the secretory vesicle. It localises to the synaptic vesicle. The protein localises to the synapse. It is found in the synaptosome. The protein resides in the cell projection. Its subcellular location is the axon. Functionally, may participate in the regulation of neuronal exocytosis. The sequence is that of Leucine-rich repeat LGI family member 3 (Lgi3) from Mus musculus (Mouse).